The primary structure comprises 846 residues: Arsenate respiratory reductase molybdopterin-containing subunit ArrA (846 aa).

Residues 1-29 constitute a signal peptide (tat-type signal); the sequence is MRIKRREFLKASAAVGAVAVASPTLNAFA. A 4Fe-4S Mo/W bis-MGD-type domain is found at 43 to 99; that stretch reads GKWIPSTCQGCTTWCPVEFLFRMAVRSKYAATQLSKANNGYCCVRGHLMLQQLYDPD. [4Fe-4S] cluster-binding residues include cysteine 50, cysteine 53, cysteine 57, and cysteine 85. An arsenite-binding site is contributed by arginine 155. Tyrosine 156 is an arsenate binding site. Histidine 179 provides a ligand contact to arsenite. Residue serine 180 participates in arsenate binding. Position 183 (cysteine 183) interacts with Mo-bis(molybdopterin guanine dinucleotide). Lysine 188 is an arsenate binding site. Tyrosine 200 serves as a coordination point for arsenite.

It belongs to the prokaryotic molybdopterin-containing oxidoreductase family. In terms of assembly, heterodimer composed of one large subunit (ArrA) and one small subunit (ArrB). The cofactor is [4Fe-4S] cluster. Mo-bis(molybdopterin guanine dinucleotide) serves as cofactor. Predicted to be exported by the Tat system. The position of the signal peptide cleavage has been experimentally proven.

The protein resides in the periplasm. The catalysed reaction is arsenite + A + H2O = arsenate + AH2 + H(+). Its function is as follows. Component of the arsenate respiratory reductase (Arr) complex, which catalyzes the reduction of arsenate (As(V)) to arsenite (As(III)). Can use acetate as the electron donor. ArrA is the arsenate-binding subunit. This Chrysiogenes arsenatis protein is Arsenate respiratory reductase molybdopterin-containing subunit ArrA.